The sequence spans 526 residues: Probable di/tripeptide-binding protein 5 (526 aa).

Positions 1–21 (MRLAAFSLFLAPLLLAQPAAA) are cleaved as a signal peptide.

Belongs to the bacterial solute-binding protein 5 family. As to quaternary structure, the complex is composed of two ATP-binding proteins (DppD and DppF), two transmembrane proteins (DppB and DppC) and a solute-binding protein (DppA5). Five orthologous SBPs (DppA1-A5) are present in P.aeruginosa, which increases the substrate specificity of the DppBCDF transporter.

Functionally, part of the ABC transporter DppABCDF involved in the uptake of various di/tripeptides. This is Probable di/tripeptide-binding protein 5 from Pseudomonas aeruginosa (strain UCBPP-PA14).